Reading from the N-terminus, the 93-residue chain is Alpha-conotoxin RVIIIA (93 aa).

A signal peptide spans Met-1–Ser-20. A propeptide spanning residues Gln-21–Arg-46 is cleaved from the precursor. 2 positions are modified to 4-carboxyglutamate: Glu-63 and Glu-68.

Post-translationally, contains 5 disulfide bonds. Expressed by the venom duct.

Its subcellular location is the secreted. Its function is as follows. Alpha-conotoxins act on postsynaptic membranes, they bind to the nicotinic acetylcholine receptors (nAChR) and thus inhibit them. This toxin provokes a nearly complete and slowly reversible inhibition of both the human adult (alpha-1-beta-1-epsilon-delta (CHRNA1-CHRNB1-CHRND-CHRNE)) and human fetal (alpha-1-beta-1-gamma-delta (CHRNA1-CHRNB1-CHRNG-CHRND)) neuromuscular nAChRs. It also reversibly blocks the neuromuscular alpha-7/CHRNA7 nAChR, the alpha-3-beta-2 (CHRNA3-CHRNB2) nAChR, the chimeric alpha-6 or -3/beta-3 or -2 (CHRNA6/CHRNA3-CHRNB2-CHRNB3) nAChR and with a low potency the alpha-4-beta-2 (CHRNA4-CHRNB2) nAChR. In addition, the toxin also inhibits the alpha-9-alpha-10 (CHRNA9-CHRNA10) nAChR with a high potency (IC(50)=187 nM). The sequence is that of Alpha-conotoxin RVIIIA from Conus radiatus (Rayed cone).